The primary structure comprises 40 residues: Photosystem II reaction center protein J (40 aa).

A helical transmembrane segment spans residues 10 to 30 (LWLVGTVAGTLVIGLLGVFFY).

The protein belongs to the PsbJ family. As to quaternary structure, PSII is composed of 1 copy each of membrane proteins PsbA, PsbB, PsbC, PsbD, PsbE, PsbF, PsbH, PsbI, PsbJ, PsbK, PsbL, PsbM, PsbT, PsbX, PsbY, PsbZ, Psb30/Ycf12, at least 3 peripheral proteins of the oxygen-evolving complex and a large number of cofactors. It forms dimeric complexes.

The protein localises to the plastid. The protein resides in the chloroplast thylakoid membrane. Functionally, one of the components of the core complex of photosystem II (PSII). PSII is a light-driven water:plastoquinone oxidoreductase that uses light energy to abstract electrons from H(2)O, generating O(2) and a proton gradient subsequently used for ATP formation. It consists of a core antenna complex that captures photons, and an electron transfer chain that converts photonic excitation into a charge separation. In Adiantum capillus-veneris (Maidenhair fern), this protein is Photosystem II reaction center protein J.